Here is a 333-residue protein sequence, read N- to C-terminus: uncharacterized protein (333 aa).

Residues 45–318 (NVIVSDSMFI…EYVKIIHPKI (274 aa)) form the Fe/B12 periplasmic-binding domain.

This is an uncharacterized protein from Methanocaldococcus jannaschii (strain ATCC 43067 / DSM 2661 / JAL-1 / JCM 10045 / NBRC 100440) (Methanococcus jannaschii).